A 303-amino-acid chain; its full sequence is Ribonuclease P protein subunit p40 (303 aa).

As to quaternary structure, component of nuclear RNase P and RNase MRP ribonucleoproteins. RNase P consists of a catalytic RNA moiety and about 10 protein subunits; POP1, POP4, POP5, POP7, RPP14, RPP21, RPP25, RPP30, RPP38 and RPP40. Within the RNase P complex, POP1, POP7 and RPP25 form the 'finger' subcomplex, POP5, RPP14, RPP40 and homodimeric RPP30 form the 'palm' subcomplex, and RPP21, POP4 and RPP38 form the 'wrist' subcomplex. All subunits of the RNase P complex interact with the catalytic RNA. Several subunits of RNase P are also part of the RNase MRP complex. RNase MRP consists of a catalytic RNA moiety and about 8 protein subunits; POP1, POP7, RPP25, RPP30, RPP38, RPP40 and possibly also POP4 and POP5.

It is found in the nucleus. Its subcellular location is the nucleolus. In terms of biological role, component of ribonuclease P, a ribonucleoprotein complex that generates mature tRNA molecules by cleaving their 5'-ends. Also a component of the MRP ribonuclease complex, which cleaves pre-rRNA sequences. This chain is Ribonuclease P protein subunit p40 (RPP40), found in Bos taurus (Bovine).